A 944-amino-acid polypeptide reads, in one-letter code: Leucine--tRNA ligase 2 (944 aa).

The 'HIGH' region motif lies at Pro36–His46. A 'KMSKS' region motif is present at residues Lys621–Ser625. Residue Lys624 coordinates ATP.

This sequence belongs to the class-I aminoacyl-tRNA synthetase family.

It is found in the cytoplasm. It catalyses the reaction tRNA(Leu) + L-leucine + ATP = L-leucyl-tRNA(Leu) + AMP + diphosphate. The protein is Leucine--tRNA ligase 2 of Sulfurisphaera tokodaii (strain DSM 16993 / JCM 10545 / NBRC 100140 / 7) (Sulfolobus tokodaii).